A 449-amino-acid polypeptide reads, in one-letter code: Alpha-L-fucosidase (449 aa).

Residues 1–19 (MGLLLLLSLLSACFQPRYA) form the signal peptide. N-linked (GlcNAc...) asparagine glycans are attached at residues Asn156, Asn224, Asn362, and Asn375.

The protein belongs to the glycosyl hydrolase 29 family. In terms of assembly, homotetramer.

It is found in the secreted. It catalyses the reaction an alpha-L-fucoside + H2O = L-fucose + an alcohol. Its function is as follows. Alpha-L-fucosidase is responsible for hydrolyzing the alpha-1,6-linked fucose joined to the reducing-end N-acetylglucosamine of the carbohydrate moieties of glycoproteins. In Branchiostoma floridae (Florida lancelet), this protein is Alpha-L-fucosidase.